The following is a 715-amino-acid chain: Glycine--tRNA ligase beta subunit (715 aa).

It belongs to the class-II aminoacyl-tRNA synthetase family. As to quaternary structure, tetramer of two alpha and two beta subunits.

Its subcellular location is the cytoplasm. It carries out the reaction tRNA(Gly) + glycine + ATP = glycyl-tRNA(Gly) + AMP + diphosphate. In Nitrosomonas europaea (strain ATCC 19718 / CIP 103999 / KCTC 2705 / NBRC 14298), this protein is Glycine--tRNA ligase beta subunit.